A 144-amino-acid polypeptide reads, in one-letter code: SsrA-binding protein (144 aa).

It belongs to the SmpB family.

The protein resides in the cytoplasm. In terms of biological role, required for rescue of stalled ribosomes mediated by trans-translation. Binds to transfer-messenger RNA (tmRNA), required for stable association of tmRNA with ribosomes. tmRNA and SmpB together mimic tRNA shape, replacing the anticodon stem-loop with SmpB. tmRNA is encoded by the ssrA gene; the 2 termini fold to resemble tRNA(Ala) and it encodes a 'tag peptide', a short internal open reading frame. During trans-translation Ala-aminoacylated tmRNA acts like a tRNA, entering the A-site of stalled ribosomes, displacing the stalled mRNA. The ribosome then switches to translate the ORF on the tmRNA; the nascent peptide is terminated with the 'tag peptide' encoded by the tmRNA and targeted for degradation. The ribosome is freed to recommence translation, which seems to be the essential function of trans-translation. In Thermus thermophilus (strain ATCC BAA-163 / DSM 7039 / HB27), this protein is SsrA-binding protein.